Here is a 941-residue protein sequence, read N- to C-terminus: Zinc finger protein 507 (941 aa).

Serine 95 carries the phosphoserine modification. 2 consecutive C2H2-type zinc fingers follow at residues 122 to 144 (YQCS…VKQH) and 152 to 175 (LMCS…VSEH). A compositionally biased stretch (basic and acidic residues) spans 165–177 (QELEAHVVSEHEN). The tract at residues 165-198 (QELEAHVVSEHENSASSQARSSPSGQGATERKSE) is disordered. Low complexity predominate over residues 178 to 192 (SASSQARSSPSGQGA). The C2H2-type 3 zinc-finger motif lies at 237-259 (YRCLFCSYTCGQQRMLKTHAWKH). The residue at position 415 (serine 415) is a Phosphoserine. The interval 455 to 477 (ELSKGLAPDENAPPGRRRTNSES) is disordered. C2H2-type zinc fingers lie at residues 630 to 652 (YRCR…LRVH), 658 to 680 (YQCP…MINH), 686 to 709 (HQCK…REQH), 746 to 768 (YRCD…RRVH), and 774 to 796 (YRCS…MWKH). A disordered region spans residues 823–856 (GKSRGKPLLTSSEERTGPTTGSPENLVSSSELTS). Polar residues predominate over residues 839 to 856 (GPTTGSPENLVSSSELTS). Residues 899 to 921 (FCCCICGFESTSKESLLDHMKEH) form a C2H2-type 9 zinc finger.

Belongs to the krueppel C2H2-type zinc-finger protein family.

Its subcellular location is the nucleus. In terms of biological role, may be involved in transcriptional regulation. This Mus musculus (Mouse) protein is Zinc finger protein 507 (Znf507).